The sequence spans 277 residues: Outer membrane lipoprotein 1 (277 aa).

Positions 1 to 19 are cleaved as a signal peptide; the sequence is MSFKKILGVALVSALALTA. Cysteine 20 carries N-palmitoyl cysteine lipidation. Residue cysteine 20 is the site of S-diacylglycerol cysteine attachment.

The protein belongs to the NlpA lipoprotein family.

The protein localises to the cell outer membrane. This is Outer membrane lipoprotein 1 (plpA) from Mannheimia haemolytica (Pasteurella haemolytica).